A 426-amino-acid chain; its full sequence is Serine--tRNA ligase (426 aa).

Position 235-237 (235-237 (TAE)) interacts with L-serine. 266–268 (RRE) is a binding site for ATP. Residue Glu289 coordinates L-serine. 353–356 (EISS) is an ATP binding site. Ser389 contributes to the L-serine binding site.

This sequence belongs to the class-II aminoacyl-tRNA synthetase family. Type-1 seryl-tRNA synthetase subfamily. Homodimer. The tRNA molecule binds across the dimer.

It is found in the cytoplasm. The catalysed reaction is tRNA(Ser) + L-serine + ATP = L-seryl-tRNA(Ser) + AMP + diphosphate + H(+). The enzyme catalyses tRNA(Sec) + L-serine + ATP = L-seryl-tRNA(Sec) + AMP + diphosphate + H(+). The protein operates within aminoacyl-tRNA biosynthesis; selenocysteinyl-tRNA(Sec) biosynthesis; L-seryl-tRNA(Sec) from L-serine and tRNA(Sec): step 1/1. Its function is as follows. Catalyzes the attachment of serine to tRNA(Ser). Is also able to aminoacylate tRNA(Sec) with serine, to form the misacylated tRNA L-seryl-tRNA(Sec), which will be further converted into selenocysteinyl-tRNA(Sec). This Trichormus variabilis (strain ATCC 29413 / PCC 7937) (Anabaena variabilis) protein is Serine--tRNA ligase.